The sequence spans 85 residues: UPF0297 protein CD630_12830 (85 aa).

This sequence belongs to the UPF0297 family.

This is UPF0297 protein CD630_12830 from Clostridioides difficile (strain 630) (Peptoclostridium difficile).